We begin with the raw amino-acid sequence, 313 residues long: Uracil-DNA glycosylase (313 aa).

The segment covering 1-12 (MIGQKTLYSFFS) has biased composition (polar residues). The interaction with FAM72A stretch occupies residues 1 to 25 (MIGQKTLYSFFSPSPARKRHAPSPE). Residues 1–29 (MIGQKTLYSFFSPSPARKRHAPSPEPAVQ) are mitochondrial localization signal. The disordered stretch occupies residues 1-68 (MIGQKTLYSF…GTPPSSPLSA (68 aa)). Phosphoserine is present on residues S12 and S14. Positions 17–19 (RKR) match the Important for nuclear sorting motif. S23 carries the post-translational modification Phosphoserine. Positions 43 to 53 (AAAIPAKKAPA) are enriched in low complexity. A Phosphothreonine modification is found at T60. The residue at position 64 (S64) is a Phosphoserine. The interaction with RPA2 stretch occupies residues 73 to 88 (RIQRNKAAALLRLAAR). Position 153 (Q153) interacts with uracil. The active-site Proton acceptor is the D154. Position 157 (H157) interacts with dsDNA. F167 is a uracil binding site. Residue S178 participates in dsDNA binding. N213 contributes to the uracil binding site. 5 residues coordinate dsDNA: S256, H277, S279, S282, and R285. A uracil-binding site is contributed by H277. K295 carries the post-translational modification N6-acetyllysine.

Belongs to the uracil-DNA glycosylase (UDG) superfamily. UNG family. Monomer. As to quaternary structure, interacts with RPA2 subunit of the RPA trimer; this interaction mediates UNG2 recruitment to RPA-coated single-stranded DNA at stalled replication forks. Interacts with PCNA; this interaction mediates UNG2 recruitment to S-phase replication foci. Interacts (via N-terminus) with FAM72A. In terms of assembly, (Microbial infection) Interacts with HIV-1 Vpr. In terms of processing, processed by mitochondrial serine or cysteine peptidases to yield a mature dominant form that lacks N-terminal 29 amino acid residues and another minor form that lacks N-terminal 77 amino acid residues. The catalytic activity of UNG1 delta29 is not product-inhibited by AP sites.

It is found in the mitochondrion. The protein localises to the nucleus. The catalysed reaction is Hydrolyzes single-stranded DNA or mismatched double-stranded DNA and polynucleotides, releasing free uracil.. It catalyses the reaction a 2'-deoxyuridine in single-stranded DNA + H2O = a 2'-deoxyribose 5'-monophosphate in single-stranded DNA + uracil. The enzyme catalyses a 2'-deoxyuridine in double-stranded DNA + H2O = a 2'-deoxyribose 5'-monophosphate in double-stranded DNA + uracil. Uracil-DNA glycosylase that hydrolyzes the N-glycosidic bond between uracil and deoxyribose in single- and double-stranded DNA (ssDNA and dsDNA) to release a free uracil residue and form an abasic (apurinic/apyrimidinic; AP) site. Excises uracil residues arising as a result of misincorporation of dUMP residues by DNA polymerase during replication or due to spontaneous or enzymatic deamination of cytosine. Mediates error-free base excision repair (BER) of uracil at replication forks. According to the model, it is recruited by PCNA to S-phase replication forks to remove misincorporated uracil at U:A base mispairs in nascent DNA strands. Via trimeric RPA it is recruited to ssDNA stretches ahead of the polymerase to allow detection and excision of deaminated cytosines prior to replication. The resultant AP sites temporarily stall replication, allowing time to repair the lesion. Mediates mutagenic uracil processing involved in antibody affinity maturation. Processes AICDA-induced U:G base mispairs at variable immunoglobulin (Ig) regions leading to the generation of transversion mutations. Operates at switch sites of Ig constant regions where it mediates Ig isotype class switch recombination. Excises AICDA-induced uracil residues forming AP sites that are subsequently nicked by APEX1 endonuclease. The accumulation of staggered nicks in opposite strands results in double strand DNA breaks that are finally resolved via non-homologous end joining repair pathway. This Homo sapiens (Human) protein is Uracil-DNA glycosylase.